Reading from the N-terminus, the 225-residue chain is UPF0502 protein Ajs_3392 (225 aa).

Belongs to the UPF0502 family.

This chain is UPF0502 protein Ajs_3392, found in Acidovorax sp. (strain JS42).